The primary structure comprises 286 residues: Glycine--tRNA ligase alpha subunit (286 aa).

It belongs to the class-II aminoacyl-tRNA synthetase family. As to quaternary structure, tetramer of two alpha and two beta subunits.

The protein localises to the cytoplasm. The enzyme catalyses tRNA(Gly) + glycine + ATP = glycyl-tRNA(Gly) + AMP + diphosphate. In Thermotoga neapolitana (strain ATCC 49049 / DSM 4359 / NBRC 107923 / NS-E), this protein is Glycine--tRNA ligase alpha subunit.